An 888-amino-acid chain; its full sequence is MDAGFFRGTSAEQDNRFSNKQKKLLKQLKFAECLEKKVDMSKVNLEVIKPWITKRVTEILGFEDDVVIEFIFNQLEVKNPDSKMMQINLTGFLNGKNAREFMGELWPLLLSAQENIAGIPTAFLELKKEEIKQRQIEQEKLASMKKQDEDKEKRDKEDKDNREKRDRSRSPRRRKSRSPSPRRRSSPIRRERKRSHSRSPHHRTKSRSATPAPEKKEATPEPEPSVKPKETVVQEATSNSDIPKAPKSEPPVPETKEISPERNSKKEREKEKEKTRQRSPTRSKSRSRSRSRSPSHSRPRRRHRSRSRRRPSPRRRPSPRRRTPPRRMPPPPRHRRSRSPVRRRRRSSASLSGSSSSSSSSRSRSPPKKPPKRTVSSPPRKTRRLSPSASPPRRRHRPSPPASPPPKPRRSPTPQQSNRARKSRGSVSPGRASAPKHKSTEKRESPSPAPKPRKAELSESEEDKGGKMAAADSVQQRRQYRRQNQQSSSDSGSSSSSEEERPKRSNVKNGEVGRRRRHSHSRSPSPSPRKRQKEPSPRRRRRSPSPPPARRRRSPSPPPPPRRRRSPSLPRRRSPSPPPRRRSPSPRRYSPPIQRRYSPSPPPKRRTASPPPPPKRRASPSPQSKRRVSHSPPPKQRSSPAAKRRSPSISSKHRKGSPPSRSNRETRSPPQNKRDSPSPRPRASHTSSSPPPLRRGASASPQRRQSPSPSTRPIRRVSRTPEPKKTKASTPSPRSARRVSSSRSASGSPEPAPKKHQGPPSPARSRSPSANWSPAKKAKSPTQSPSPARNSDQEGGGKKKKKKKDKKHKKDKKHKKHKKHKKEKAAVAAAPAAVAAADTTSAQEEQEAETEPKKETESEPEDNLDDLEKHLREKALRSMRKAQVSPPS.

One can recognise a PWI domain in the interval 27–126; the sequence is QLKFAECLEK…AGIPTAFLEL (100 aa). A compositionally biased stretch (basic and acidic residues) spans 139 to 169; the sequence is EKLASMKKQDEDKEKRDKEDKDNREKRDRSR. Residues 139-888 are disordered; sequence EKLASMKKQD…MRKAQVSPPS (750 aa). The span at 170–206 shows a compositional bias: basic residues; that stretch reads SPRRRKSRSPSPRRRSSPIRRERKRSHSRSPHHRTKS. 2 stretches are compositionally biased toward basic and acidic residues: residues 213–232 and 254–276; these read PEKK…KETV and ETKE…EKTR. Basic residues-rich tracts occupy residues 277–325 and 332–347; these read QRSP…RTPP and PRHR…RRRS. Composition is skewed to low complexity over residues 348–364 and 473–496; these read SASL…SRSR and SVQQ…SSSS. Composition is skewed to basic residues over residues 528–554 and 561–585; these read PRKR…RRRS and PRRR…RSPS. Low complexity predominate over residues 586–598; it reads PRRYSPPIQRRYS. 2 stretches are compositionally biased toward basic residues: residues 614-629 and 642-656; these read PKRR…RRVS and AKRR…HRKG. Over residues 662–677 the composition is skewed to basic and acidic residues; sequence SNRETRSPPQNKRDSP. 3 stretches are compositionally biased toward low complexity: residues 697 to 712, 728 to 749, and 763 to 775; these read ASAS…PSTR, ASTP…SGSP, and ARSR…WSPA. The segment covering 780–790 has biased composition (polar residues); it reads SPTQSPSPARN. Positions 798-823 are enriched in basic residues; it reads KKKKKKKDKKHKKDKKHKKHKKHKKE. The segment covering 826 to 843 has biased composition (low complexity); it reads AVAAAPAAVAAADTTSAQ. Residues 866-876 show a composition bias toward basic and acidic residues; sequence DLEKHLREKAL.

Belongs to the splicing factor SR family.

Its subcellular location is the nucleus. Involved in pre-mRNA splicing and processing events. The polypeptide is Serine/arginine repetitive matrix protein 1 (SRRM1) (Gallus gallus (Chicken)).